The primary structure comprises 199 residues: Probable GTP-binding protein EngB (199 aa).

Residues 22–196 (NWPEFAFSGR…GKFILDLVDS (175 aa)) enclose the EngB-type G domain. GTP-binding positions include 30–37 (GRSNVGKS), 57–61 (GRTQS), 75–78 (DLPG), 142–145 (TKVD), and 175–177 (FSA). Ser37 and Thr59 together coordinate Mg(2+).

Belongs to the TRAFAC class TrmE-Era-EngA-EngB-Septin-like GTPase superfamily. EngB GTPase family. Mg(2+) is required as a cofactor.

Functionally, necessary for normal cell division and for the maintenance of normal septation. This Halothermothrix orenii (strain H 168 / OCM 544 / DSM 9562) protein is Probable GTP-binding protein EngB.